Reading from the N-terminus, the 283-residue chain is Ribosomal RNA small subunit methyltransferase H (283 aa).

Residues 31 to 33 (GGH), Asp-50, Phe-77, Asp-93, and Gln-100 contribute to the S-adenosyl-L-methionine site.

This sequence belongs to the methyltransferase superfamily. RsmH family.

It is found in the cytoplasm. It catalyses the reaction cytidine(1402) in 16S rRNA + S-adenosyl-L-methionine = N(4)-methylcytidine(1402) in 16S rRNA + S-adenosyl-L-homocysteine + H(+). Specifically methylates the N4 position of cytidine in position 1402 (C1402) of 16S rRNA. In Trichodesmium erythraeum (strain IMS101), this protein is Ribosomal RNA small subunit methyltransferase H.